The following is a 347-amino-acid chain: Phenylalanine--tRNA ligase alpha subunit (347 aa).

Glutamate 265 is a binding site for Mg(2+).

Belongs to the class-II aminoacyl-tRNA synthetase family. Phe-tRNA synthetase alpha subunit type 1 subfamily. As to quaternary structure, tetramer of two alpha and two beta subunits. The cofactor is Mg(2+).

The protein localises to the cytoplasm. The catalysed reaction is tRNA(Phe) + L-phenylalanine + ATP = L-phenylalanyl-tRNA(Phe) + AMP + diphosphate + H(+). The protein is Phenylalanine--tRNA ligase alpha subunit of Mycolicibacterium paratuberculosis (strain ATCC BAA-968 / K-10) (Mycobacterium paratuberculosis).